The sequence spans 32 residues: Potassium channel toxin alpha-KTx 10.2 (32 aa).

Intrachain disulfides connect C3/C22, C8/C12, and C27/C29. Position 32 is a tyrosine amide (Y32).

The protein belongs to the short scorpion toxin superfamily. Potassium channel inhibitor family. Alpha-KTx 10 subfamily. As to expression, expressed by the venom gland.

It localises to the secreted. In terms of biological role, blocks Shaker B potassium-channels (Kv1.1/KCNA1 sub-family). The protein is Potassium channel toxin alpha-KTx 10.2 of Centruroides noxius (Mexican scorpion).